A 133-amino-acid polypeptide reads, in one-letter code: MIWFLAFILFLAAGELVSSSGLLNCEPSEIAYEEITRQGQKSTNTLCKCKYEPYKFSTATSKDKTTVTVQYKCKQVRPCVYGQKCQSLEDGPQEKALKTHCTCAKGQQCHSTPEHADESRIFGDTKYYSFVCV.

Residues 1 to 19 (MIWFLAFILFLAAGELVSS) form the signal peptide.

It belongs to the scoloptoxin-11 family. Contains 10 disulfide bonds. In terms of tissue distribution, expressed by the venom gland.

It is found in the secreted. This is U-scoloptoxin(11)-Sm1a from Scolopendra morsitans (Tanzanian blue ringleg centipede).